A 1006-amino-acid chain; its full sequence is Probable beta-galactosidase A (1006 aa).

The signal sequence occupies residues 1-18 (MKLLSVCAIALLAAQAAG). Substrate contacts are provided by tyrosine 96, asparagine 140, alanine 141, and glutamate 142. A glycan (N-linked (GlcNAc...) asparagine) is linked at asparagine 156. Asparagine 199 is a substrate binding site. Catalysis depends on glutamate 200, which acts as the Proton donor. Cysteine 205 and cysteine 206 are joined by a disulfide. Tyrosine 260 is a substrate binding site. A disulfide bridge links cysteine 266 with cysteine 315. The active-site Nucleophile is glutamate 298. Residue tyrosine 364 coordinates substrate. 7 N-linked (GlcNAc...) asparagine glycosylation sites follow: asparagine 373, asparagine 402, asparagine 422, asparagine 622, asparagine 760, asparagine 777, and asparagine 914.

Belongs to the glycosyl hydrolase 35 family.

Its subcellular location is the secreted. It carries out the reaction Hydrolysis of terminal non-reducing beta-D-galactose residues in beta-D-galactosides.. In terms of biological role, cleaves beta-linked terminal galactosyl residues from gangliosides, glycoproteins, and glycosaminoglycans. This Aspergillus fumigatus (strain ATCC MYA-4609 / CBS 101355 / FGSC A1100 / Af293) (Neosartorya fumigata) protein is Probable beta-galactosidase A (lacA).